The following is a 426-amino-acid chain: Glutamate-1-semialdehyde 2,1-aminomutase (426 aa).

K266 bears the N6-(pyridoxal phosphate)lysine mark.

Belongs to the class-III pyridoxal-phosphate-dependent aminotransferase family. HemL subfamily. Pyridoxal 5'-phosphate serves as cofactor.

The protein resides in the cytoplasm. The enzyme catalyses (S)-4-amino-5-oxopentanoate = 5-aminolevulinate. It functions in the pathway porphyrin-containing compound metabolism; protoporphyrin-IX biosynthesis; 5-aminolevulinate from L-glutamyl-tRNA(Glu): step 2/2. In Methanocaldococcus jannaschii (strain ATCC 43067 / DSM 2661 / JAL-1 / JCM 10045 / NBRC 100440) (Methanococcus jannaschii), this protein is Glutamate-1-semialdehyde 2,1-aminomutase (hemL).